Consider the following 331-residue polypeptide: Pectinesterase (331 aa).

A signal peptide spans 1–17 (MVKSVLASALFAVSALA). Substrate is bound at residue Gln-139. The active-site Proton donor is the Asp-162. Residue Asp-183 is the Nucleophile of the active site. Substrate is bound by residues Arg-248 and Trp-250.

It belongs to the pectinesterase family.

Its subcellular location is the secreted. It catalyses the reaction [(1-&gt;4)-alpha-D-galacturonosyl methyl ester](n) + n H2O = [(1-&gt;4)-alpha-D-galacturonosyl](n) + n methanol + n H(+). The protein operates within glycan metabolism; pectin degradation; 2-dehydro-3-deoxy-D-gluconate from pectin: step 1/5. In terms of biological role, involved in maceration and soft-rotting of plant tissue. This Aspergillus aculeatus protein is Pectinesterase (pme1).